A 724-amino-acid polypeptide reads, in one-letter code: Solute carrier organic anion transporter family member 4C1 (724 aa).

The tract at residues 1-80 is disordered; sequence MQGSKGVENP…PPGSQLSELE (80 aa). At 1 to 101 the chain is on the cytoplasmic side; that stretch reads MQGSKGVENP…QCLQRCNNPK (101 aa). A phosphoserine mark is found at Ser15 and Ser16. Thr19 bears the Phosphothreonine mark. Phosphoserine occurs at positions 24, 26, and 28. The segment covering 25–46 has biased composition (polar residues); that stretch reads ASPSQVEVSAVASRNQNGGSQP. A helical membrane pass occupies residues 102-122; the sequence is GFLLHYCLLALTQGIVVNGLV. Residues 123-141 lie on the Extracellular side of the membrane; sequence NISISTIEKRYEMKSSLTG. Residues 142–162 form a helical membrane-spanning segment; the sequence is LISSSYDISFCVLSLFVSFFG. Residues 163–168 are Cytoplasmic-facing; the sequence is ERGHKP. The helical transmembrane segment at 169–193 threads the bilayer; that stretch reads RWLAFASFMIGLGALVFSLPHFFSG. At 194-218 the chain is on the extracellular side; the sequence is RYELGTIFEDTCLTRNSTRCASSTS. The helical transmembrane segment at 219 to 249 threads the bilayer; it reads LLSNYFYVFVLGQLLLGTGGTPLYTLGTAFI. Residues 250–269 are Cytoplasmic-facing; that stretch reads DDSVPTHKSSLYIGIGYSMS. Residues 270–290 traverse the membrane as a helical segment; sequence ILGPAIGYVLGGQLLTMYIDV. Topologically, residues 291–306 are extracellular; that stretch reads AMGQSSDLTEDDPRWL. The chain crosses the membrane as a helical span at residues 307-331; it reads GAWWIGFLLAWLFAWSLIMPFSCFP. Residues 332 to 376 lie on the Cytoplasmic side of the membrane; sequence KHLPGTAKIQAGKTSQTHQNNSTSFQHMDENFGKSIKDFPTAVKN. A helical transmembrane segment spans residues 377 to 398; the sequence is LMRNTVFICLVLSTTSEALVTT. Topologically, residues 399–418 are extracellular; it reads GFATFLPKFIENQFGLTSSF. A helical membrane pass occupies residues 419-442; it reads AATLGGAVLIPGAALGQILGGVLV. Over 443–446 the chain is Cytoplasmic; the sequence is SKFK. Residues 447-470 form a helical membrane-spanning segment; sequence MKCKNTMKFALCTSGVALMLSFVF. Residues 471–580 lie on the Extracellular side of the membrane; sequence IYAKCENGPF…KTQCSNLPIF (110 aa). The 56-residue stretch at 494-549 folds into the Kazal-like domain; that stretch reads GNLTAPCNANCNCLRSYYYPLCGSDGVQYFSPCFAGCLNSVSNRKPKAYYNCSCIE. Cystine bridges form between Cys500/Cys530, Cys506/Cys526, and Cys515/Cys547. Residues 581-603 form a helical membrane-spanning segment; that stretch reads LGIFFITVIFTFMAGTPITVSIL. Residues 604–612 are Cytoplasmic-facing; it reads RCVNHRQRS. A helical transmembrane segment spans residues 613-638; the sequence is LALGVQFMLLRLLGTIPGPIIFGVTI. The Extracellular portion of the chain corresponds to 639-672; that stretch reads DSTCVLWDINECGTKGACWIYDNIRMAHMLVAIS. Residues 673–690 form a helical membrane-spanning segment; it reads VTCKVITIFFNGLAIVLY. The Cytoplasmic portion of the chain corresponds to 691–724; the sequence is KPPPPGTEVSFQSQNVVVSTITVEEDLNKIENEG.

The protein belongs to the organo anion transporter (TC 2.A.60) family. As to expression, predominantly expressed in kidney and lung but also weakly expressed in brain. Localizes primarily in the proximal straight tubules, the S3 fraction of the nephron.

The protein resides in the basolateral cell membrane. The protein localises to the apical cell membrane. It carries out the reaction estrone 3-sulfate(out) = estrone 3-sulfate(in). The enzyme catalyses L-thyroxine(out) = L-thyroxine(in). The catalysed reaction is 3,3',5-triiodo-L-thyronine(out) = 3,3',5-triiodo-L-thyronine(in). It catalyses the reaction chenodeoxycholate(out) = chenodeoxycholate(in). It carries out the reaction glycocholate(out) = glycocholate(in). The enzyme catalyses L-homoarginine(in) = L-homoarginine(out). The catalysed reaction is L-arginine(in) = L-arginine(out). It catalyses the reaction N(omega),N(omega)-dimethyl-L-arginine(out) = N(omega),N(omega)-dimethyl-L-arginine(in). Functionally, mediates the transport of organic anions such as steroids (estrone 3-sulfate, chenodeoxycholate, glycocholate) and thyroid hormones (3,3',5-triiodo-L-thyronine (T3), L-thyroxine (T4)), in the kidney. Capable of transporting cAMP and pharmacological substances such as digoxin, ouabain and methotrexate. Transport is independent of sodium, chloride ion, and ATP. Transport activity is stimulated by an acidic extracellular environment due to increased substrate affinity to the transporter. The driving force for this transport activity is currently not known. The role of hydrogencarbonate (HCO3(-), bicarbonate) as the probable counteranion that exchanges for organic anions is still not well defined. Functions as an uptake transporter at the apical membrane, suggesting a role in renal reabsorption. Involved in the renal secretion of the uremic toxin ADMA (N(omega),N(omega)-dimethyl-L-arginine or asymmetrical dimethylarginine), which is associated to cardiovascular events and mortality, and the structurally related amino acids L-arginine and L-homoarginine (a cardioprotective biomarker). Can act bidirectionally, suggesting a dual protective role of this transport protein; exporting L-homoarginine after being synthesized in proximal tubule cells, and mediating uptake of ADMA from the blood into proximal tubule cells where it is degraded by the enzyme dimethylarginine dimethylaminohydrolase 1 (DDAH1). May be involved in sperm maturation by enabling directed movement of organic anions and compounds within or between cells. This ion-transporting process is important to maintain the strict epididymal homeostasis necessary for sperm maturation. May have a role in secretory functions since seminal vesicle epithelial cells are assumed to secrete proteins involved in decapacitation by modifying surface proteins to facilitate the acquisition of the ability to fertilize the egg. The polypeptide is Solute carrier organic anion transporter family member 4C1 (Rattus norvegicus (Rat)).